Here is a 473-residue protein sequence, read N- to C-terminus: Argininosuccinate lyase (473 aa).

Belongs to the lyase 1 family. Argininosuccinate lyase subfamily.

The protein localises to the cytoplasm. It catalyses the reaction 2-(N(omega)-L-arginino)succinate = fumarate + L-arginine. It functions in the pathway amino-acid biosynthesis; L-arginine biosynthesis; L-arginine from L-ornithine and carbamoyl phosphate: step 3/3. This Chelativorans sp. (strain BNC1) protein is Argininosuccinate lyase.